The following is a 140-amino-acid chain: Putative esterase MT1895 (140 aa).

Belongs to the thioesterase PaaI family.

This chain is Putative esterase MT1895, found in Mycobacterium tuberculosis (strain CDC 1551 / Oshkosh).